The following is a 379-amino-acid chain: Cobalt-precorrin-5B C(1)-methyltransferase (379 aa).

The protein belongs to the CbiD family.

It catalyses the reaction Co-precorrin-5B + S-adenosyl-L-methionine = Co-precorrin-6A + S-adenosyl-L-homocysteine. It functions in the pathway cofactor biosynthesis; adenosylcobalamin biosynthesis; cob(II)yrinate a,c-diamide from sirohydrochlorin (anaerobic route): step 6/10. Its function is as follows. Catalyzes the methylation of C-1 in cobalt-precorrin-5B to form cobalt-precorrin-6A. The protein is Cobalt-precorrin-5B C(1)-methyltransferase of Klebsiella pneumoniae subsp. pneumoniae (strain ATCC 700721 / MGH 78578).